We begin with the raw amino-acid sequence, 102 residues long: Bowman-Birk type wound-induced proteinase inhibitor WIP1 (102 aa).

Positions 1 to 15 (MKSSPHLVLILCLQA) are cleaved as a signal peptide. Cystine bridges form between Cys46–Cys102, Cys47–Cys60, Cys50–Cys98, Cys67–Cys74, and Cys71–Cys90.

It belongs to the Bowman-Birk serine protease inhibitor family.

The sequence is that of Bowman-Birk type wound-induced proteinase inhibitor WIP1 (WIP1) from Zea mays (Maize).